The sequence spans 369 residues: Extracellular signal-regulated kinase 2 (369 aa).

Residues 14-304 (YEVLQKIGKG…AEEALAHPFV (291 aa)) enclose the Protein kinase domain. ATP contacts are provided by residues 20 to 28 (IGKGAYGIV) and lysine 43. Residue aspartate 137 is the Proton acceptor of the active site. The residue at position 176 (threonine 176) is a Phosphothreonine. The TXY motif lies at 176–178 (TEY). Tyrosine 178 is modified (phosphotyrosine). Residues 346 to 369 (KKKEERKKQTNPTKPDTTAPTLST) are disordered. The segment covering 355 to 369 (TNPTKPDTTAPTLST) has biased composition (polar residues).

The protein belongs to the protein kinase superfamily. CMGC Ser/Thr protein kinase family. MAP kinase subfamily. It depends on Mg(2+) as a cofactor. Dually phosphorylated on Thr-176 and Tyr-178, which activates the enzyme.

The catalysed reaction is L-seryl-[protein] + ATP = O-phospho-L-seryl-[protein] + ADP + H(+). It carries out the reaction L-threonyl-[protein] + ATP = O-phospho-L-threonyl-[protein] + ADP + H(+). Its activity is regulated as follows. Activated by tyrosine and threonine phosphorylation. Implicated in the relay of the cAMP chemotactic signal and cell differentiation. Important for receptor-mediated activation of adenylyl cyclase. In Dictyostelium discoideum (Social amoeba), this protein is Extracellular signal-regulated kinase 2 (erkB).